A 185-amino-acid chain; its full sequence is Ribosome-recycling factor (185 aa).

This sequence belongs to the RRF family.

The protein localises to the cytoplasm. Functionally, responsible for the release of ribosomes from messenger RNA at the termination of protein biosynthesis. May increase the efficiency of translation by recycling ribosomes from one round of translation to another. The polypeptide is Ribosome-recycling factor (Coxiella burnetii (strain CbuK_Q154) (Coxiella burnetii (strain Q154))).